The chain runs to 249 residues: MAGHSKWANIKHRKAKQDASRGKVFTKYIREIVTAAKLGGADPASNPRLRAVVEKALSVNMTRDTINRAIQRGVGGEDNDDLKEVTYEGYGVGGVAVLVETMTDNLNRTVPDVRHCFSKTNGNLGTAGSVAYLFTKRGEITFDDISLEDKIMDVALEAGAEDIEVSEDEILVITSPETFGEVQDALAAAGLKSDNAEVVMSPSTKAEITDIDQAKQVMKLIDMLEDLDDVQNVYTNVEFSDEVLAQLDA.

Belongs to the TACO1 family.

The protein localises to the cytoplasm. The protein is Probable transcriptional regulatory protein A1S_1496 of Acinetobacter baumannii (strain ATCC 17978 / DSM 105126 / CIP 53.77 / LMG 1025 / NCDC KC755 / 5377).